Consider the following 475-residue polypeptide: Doublecortin domain-containing protein 2 (475 aa).

Doublecortin domains lie at 17 to 100 (KSVL…LNYL) and 139 to 221 (CTIF…LPYS). Residues 234–475 (YGQKASSLPP…EANKASSAVA (242 aa)) form a disordered region. Over residues 252–272 (GSGNYRQSKSTIGSSDNSSPQ) the composition is skewed to polar residues. The residue at position 270 (serine 270) is a Phosphoserine. A compositionally biased stretch (basic and acidic residues) spans 353 to 365 (EKTSKDANQKEDF). Residues 407–425 (TDEENGEELDQVAEELQPT) show a composition bias toward acidic residues.

Interacts with DVL1, DVL2 and DVL3. As to expression, expressed in hair cells of the inner ear.

It is found in the cell projection. The protein resides in the cilium. It localises to the cytoplasm. Its subcellular location is the cytoskeleton. The protein localises to the cilium axoneme. It is found in the kinocilium. In terms of biological role, protein that plays a role in the inhibition of canonical Wnt signaling pathway. May be involved in neuronal migration during development of the cerebral neocortex. Involved in the control of ciliogenesis and ciliary length. This Mus musculus (Mouse) protein is Doublecortin domain-containing protein 2 (Dcdc2).